Here is a 158-residue protein sequence, read N- to C-terminus: Phosphopantetheine adenylyltransferase (158 aa).

Position 10 (Thr-10) interacts with substrate. ATP-binding positions include 10–11 (TF) and His-18. Lys-42, Leu-74, and Arg-88 together coordinate substrate. Residues 89–91 (GLR), Glu-99, and 124–130 (NSFISST) each bind ATP.

The protein belongs to the bacterial CoaD family. In terms of assembly, homohexamer. The cofactor is Mg(2+).

Its subcellular location is the cytoplasm. The enzyme catalyses (R)-4'-phosphopantetheine + ATP + H(+) = 3'-dephospho-CoA + diphosphate. It functions in the pathway cofactor biosynthesis; coenzyme A biosynthesis; CoA from (R)-pantothenate: step 4/5. Functionally, reversibly transfers an adenylyl group from ATP to 4'-phosphopantetheine, yielding dephospho-CoA (dPCoA) and pyrophosphate. The polypeptide is Phosphopantetheine adenylyltransferase (Shewanella woodyi (strain ATCC 51908 / MS32)).